The chain runs to 212 residues: Orotate phosphoribosyltransferase (212 aa).

Position 26 (Lys-26) interacts with 5-phospho-alpha-D-ribose 1-diphosphate. An orotate-binding site is contributed by 34 to 35; that stretch reads FF. Residues 72–73, Arg-98, Lys-99, Lys-102, His-104, and 123–131 contribute to the 5-phospho-alpha-D-ribose 1-diphosphate site; these read YK and DDVITAGTA. Orotate-binding residues include Thr-127 and Arg-155.

The protein belongs to the purine/pyrimidine phosphoribosyltransferase family. PyrE subfamily. Homodimer. Requires Mg(2+) as cofactor.

The catalysed reaction is orotidine 5'-phosphate + diphosphate = orotate + 5-phospho-alpha-D-ribose 1-diphosphate. Its pathway is pyrimidine metabolism; UMP biosynthesis via de novo pathway; UMP from orotate: step 1/2. Its function is as follows. Catalyzes the transfer of a ribosyl phosphate group from 5-phosphoribose 1-diphosphate to orotate, leading to the formation of orotidine monophosphate (OMP). This chain is Orotate phosphoribosyltransferase, found in Marinobacter nauticus (strain ATCC 700491 / DSM 11845 / VT8) (Marinobacter aquaeolei).